The following is a 464-amino-acid chain: Asparagine--tRNA ligase (464 aa).

It belongs to the class-II aminoacyl-tRNA synthetase family. As to quaternary structure, homodimer.

It is found in the cytoplasm. The catalysed reaction is tRNA(Asn) + L-asparagine + ATP = L-asparaginyl-tRNA(Asn) + AMP + diphosphate + H(+). This Clostridium botulinum (strain Alaska E43 / Type E3) protein is Asparagine--tRNA ligase.